Here is a 349-residue protein sequence, read N- to C-terminus: Quinone oxidoreductase-like protein 2 (349 aa).

The residue at position 35 (lysine 35) is an N6-acetyllysine. Lysine 200 is subject to N6-succinyllysine.

Belongs to the zinc-containing alcohol dehydrogenase family. Quinone oxidoreductase subfamily.

In Bos taurus (Bovine), this protein is Quinone oxidoreductase-like protein 2.